Here is a 490-residue protein sequence, read N- to C-terminus: MVPVVALVGRPNVGKSTLFNRLTRTRDALVADFPGLTRDRKYGRAEVEGREFICIDTGGIDGTEDGVETRMAEQSLLAIEEADVVLFMVDARAGLMPADEAIAKHLRSREKPTFLVANKTDGLDPDQAVVDFYSLGLGEIYPIAASHGRGVLSLLEHVLLPWMDDVAPQEEVDEDAEYWAQFEAEQNGEEAPEDDFDPQSLPIKLAIVGRPNVGKSTLTNRILGEERVVVYDMPGTTRDSIYIPMERDEREYVLIDTAGVRKRGKITDAVEKFSVIKTLQAIEDANVVLLVIDAREGISDQDLSLLGFILNSGRSLVIVVNKWDGLSQEVKEQVKETLDFRLGFIDFARVHFISALHGSGVGNLFESVREAYDSSTRRVSTAMLTRIMTMAVEDHQPPLVRGRRVKLKYAHTGGYNPPIVVIHGNQVKDLPDSYKRYLMNYFRKSLEVMGTPIRIQFKEGENPYANKRNTLTPTQMRKRKRLMKHIKKSK.

EngA-type G domains lie at 3–166 (PVVA…MDDV) and 203–376 (IKLA…DSST). Residues 9–16 (GRPNVGKS), 56–60 (DTGGI), 118–121 (NKTD), 209–216 (GRPNVGKS), 256–260 (DTAGV), and 321–324 (NKWD) each bind GTP. One can recognise a KH-like domain in the interval 377–461 (RRVSTAMLTR…PIRIQFKEGE (85 aa)).

The protein belongs to the TRAFAC class TrmE-Era-EngA-EngB-Septin-like GTPase superfamily. EngA (Der) GTPase family. In terms of assembly, associates with the 50S ribosomal subunit.

Functionally, GTPase that plays an essential role in the late steps of ribosome biogenesis. The polypeptide is GTPase Der (Salmonella typhi).